The following is a 616-amino-acid chain: Prolactin receptor (616 aa).

An N-terminal signal peptide occupies residues 1-24; the sequence is MKENVASMIVFLLLLFLNIRLLKG. Residues 25-234 lie on the Extracellular side of the membrane; the sequence is QSPPGKPFIF…QIPNDFTMKD (210 aa). 2 Fibronectin type-III domains span residues 27 to 128 and 129 to 229; these read PPGK…VEPD and PPVN…IPND. A disulfide bridge links Cys-36 with Cys-46. Asn-59 carries an N-linked (GlcNAc...) asparagine glycan. Cys-75 and Cys-86 are oxidised to a cystine. N-linked (GlcNAc...) asparagine glycosylation is found at Asn-104 and Asn-132. The Zn(2+) site is built by Asp-211 and His-212. A WSXWS motif motif is present at residues 215-219; the sequence is WSVWS. A helical transmembrane segment spans residues 235–258; that stretch reads ITVWIFVAVLSTIICLIMVWAVAL. Residues 259-616 are Cytoplasmic-facing; that stretch reads KGYSMVTCIF…DPACFMHSLH (358 aa). The short motif at 267–275 is the Box 1 motif element; sequence IFPPVPGPK. Disordered regions lie at residues 326 to 375, 454 to 492, and 568 to 593; these read MPAH…STFH, QSSK…PKEK, and ESTK…STAP. Residues 463–482 show a composition bias toward basic and acidic residues; the sequence is GEEKATKQREVESSHSKAEQ.

It belongs to the type I cytokine receptor family. Type 1 subfamily. In terms of assembly, interacts with SMARCA1. Interacts with NEK3 and VAV2 and this interaction is prolactin-dependent.

Its subcellular location is the membrane. Functionally, this is a receptor for the anterior pituitary hormone prolactin. In Oryctolagus cuniculus (Rabbit), this protein is Prolactin receptor (PRLR).